A 279-amino-acid polypeptide reads, in one-letter code: Energy-coupling factor transporter ATP-binding protein EcfA1 (279 aa).

The 235-residue stretch at 6-240 (VRLEHVFYKY…ADAMREIGLG (235 aa)) folds into the ABC transporter domain. 40–47 (GHNGSGKS) is an ATP binding site.

Belongs to the ABC transporter superfamily. Energy-coupling factor EcfA family. Forms a stable energy-coupling factor (ECF) transporter complex composed of 2 membrane-embedded substrate-binding proteins (S component), 2 ATP-binding proteins (A component) and 2 transmembrane proteins (T component).

Its subcellular location is the cell membrane. ATP-binding (A) component of a common energy-coupling factor (ECF) ABC-transporter complex. Unlike classic ABC transporters this ECF transporter provides the energy necessary to transport a number of different substrates. This chain is Energy-coupling factor transporter ATP-binding protein EcfA1, found in Listeria monocytogenes serovar 1/2a (strain ATCC BAA-679 / EGD-e).